A 1255-amino-acid polypeptide reads, in one-letter code: MESPVVEGNSGEVATPTLPQPPTPVSSNIRVVCRVRPLTELEKGRNEHSIVHFFDSKSISIRANGPQFTFDRIFGYQETQSQIFEDVAEPIVNDFLDGYHGTIIAYGQTASGKTFTMVGDPDSHGIIPRVIESIFVGISKMREKDTSLSLAFCLKISALELYNEKLYDLYDASKSNLNIREHKQNGIYVEGISEIVITSIEEAYNFLNISNNNRAIASTKMSAASSRSHSVLMIELSQQNLSMESSKISKLFLVDLAGSERAHKTGAEGDRMQEAKNINLSLSALGKVINALTCGANYVPYRDSKLTRVLQDSLGGNSKTSLIINCSPSNNNEHETITTLQFGTRAKTIKNQPKINKKITYHELELFIIKLAKDLEKSRKECEEITRSKNLEINNLLIQLENNQKMVVESNQKLELLNSQISSNHSFDNTFKEIENTCENSKIIFDDLNDHINNNNNVDENNNTNNNDNNNNDNNNNNQYQEESNQYQQENNQKDGDQNNSSFDSIKVEDLRDLDDEPDIEDIILNSTLGNISDDDDDDDDHHSNNNNVDDNNNGEINNDSDGYLNRSLKDIKIPEISDLNDHNINNNNNNNNNINNDNNSNSGGLRVSTSYITSSPNLSPSKSMDVNNSPPLFSYFKTKDFPPSSDENDKFFNDLIAKGENEQQQQQQQHNDDDEDIKSTTSNATTTTITTIDMNASHPSGIDDPIEFTIIKSDKTITSTIERETIQPSSLSNSTSLLDIETVESSTLPAPPPVTTTTTLTTVTTTKLTKTTNIPSNTNDINSIDDFGFSKIEEEGSSSNRKPNDTAILSFGDDDDEENEDNENEDVIVDSDEDTHSGKNNLLNTFKNDHHRGDFGATPTKSIFNKNGNITIKEFETPQQQQQQQQQQQQQQQQQQQQQQPLILQTTSTNPTIISIKSNKEPSPSSSTTTSIKKKNFNKRRSWIIFTIILTITLVSSSLLCLYLPEYKERLVQRRGYLNKLGIYSDYPTNEKISLAQHNQISLAKELYGGNSKQYYDEMSSFNTAYNHLIEMNHLETAVSKIFGSAIDLRFSGDDVINSIECKRAIHKLKTNNYVNGDLDQQQQQHNYITKIDQLSEQSKEQNQLIENFKLDLKNKTSEIEKLEKEIKQKDNKIKEKEEKIELIESRVLNEEKGGEKVLEDQIISLRNDKNTLSTQILNLEGDKKSLGVLVIKLNSDKTEIQNEVKELKRKVQELEDAPIALIPNPFVKWVKSFYVEKKSWFVENIYKIWNWFK.

The disordered stretch occupies residues 1 to 26 (MESPVVEGNSGEVATPTLPQPPTPVS). Positions 28–349 (NIRVVCRVRP…LQFGTRAKTI (322 aa)) constitute a Kinesin motor domain. 107–114 (GQTASGKT) contacts ATP. Composition is skewed to low complexity over residues 454 to 491 (NNNNVDENNNTNNNDNNNNDNNNNNQYQEESNQYQQEN), 545 to 563 (NNNNVDDNNNGEINNDSDG), and 583 to 603 (HNINNNNNNNNNINNDNNSNS). 6 disordered regions span residues 454–503 (NNNN…NSSF), 530–564 (GNISDDDDDDDDHHSNNNNVDDNNNGEINNDSDGY), 579–628 (DLND…MDVN), 661–686 (ENEQQQQQQQHNDDDEDIKSTTSNAT), 795–864 (EEGS…TKSI), and 915–934 (ISIKSNKEPSPSSSTTTSIK). Residues 608 to 628 (VSTSYITSSPNLSPSKSMDVN) are compositionally biased toward polar residues. Over residues 813–834 (GDDDDEENEDNENEDVIVDSDE) the composition is skewed to acidic residues. Residues 915 to 932 (ISIKSNKEPSPSSSTTTS) are compositionally biased toward low complexity. Residues 945-965 (IIFTIILTITLVSSSLLCLYL) traverse the membrane as a helical segment. The stretch at 1088–1223 (NYITKIDQLS…QELEDAPIAL (136 aa)) forms a coiled coil.

Belongs to the TRAFAC class myosin-kinesin ATPase superfamily. Kinesin family.

It localises to the nucleus membrane. Its subcellular location is the cytoplasm. It is found in the cytoskeleton. Functionally, microtubule-associated force-producing protein that plays a role in organelle transport. Its motor activity is directed toward the microtubule's plus end. May be involved in cell motility or cell differentiation during prestalk formation. The polypeptide is Kinesin-related protein 7 (kif7) (Dictyostelium discoideum (Social amoeba)).